A 641-amino-acid chain; its full sequence is uncharacterized protein (641 aa).

A Phosphoserine modification is found at serine 112. Disordered stretches follow at residues 118-243, 261-289, 355-386, and 404-430; these read STSI…LDPT, KSPR…TVSI, DKSD…RLEA, and DGEG…QSHS. Polar residues predominate over residues 132–162; the sequence is ASVSSQYPHRTFQKQVNKTCVSKSDGPSGNG. Serine 198 is modified (phosphoserine). Composition is skewed to polar residues over residues 222–234 and 278–289; these read NQEL…SRSN and RQASSAGDTVSI. Residues 355-368 are compositionally biased toward basic and acidic residues; that stretch reads DKSDGDQREEDCVR. 2 stretches are compositionally biased toward low complexity: residues 374-383 and 421-430; these read RSSSPTSPTR and SSSAAVQSHS.

This is an uncharacterized protein from Mus musculus (Mouse).